A 238-amino-acid polypeptide reads, in one-letter code: Probable transcriptional regulatory protein TC_0742 (238 aa).

The segment at 1–21 (MAGHSKWANTKHRKERADHKK) is disordered. The span at 9–21 (NTKHRKERADHKK) shows a compositional bias: basic residues.

This sequence belongs to the TACO1 family.

It is found in the cytoplasm. The polypeptide is Probable transcriptional regulatory protein TC_0742 (Chlamydia muridarum (strain MoPn / Nigg)).